The sequence spans 90 residues: DNA-directed RNA polymerase subunit omega (90 aa).

Belongs to the RNA polymerase subunit omega family. In terms of assembly, the RNAP catalytic core consists of 2 alpha, 1 beta, 1 beta' and 1 omega subunit. When a sigma factor is associated with the core the holoenzyme is formed, which can initiate transcription.

It catalyses the reaction RNA(n) + a ribonucleoside 5'-triphosphate = RNA(n+1) + diphosphate. Promotes RNA polymerase assembly. Latches the N- and C-terminal regions of the beta' subunit thereby facilitating its interaction with the beta and alpha subunits. This Beutenbergia cavernae (strain ATCC BAA-8 / DSM 12333 / CCUG 43141 / JCM 11478 / NBRC 16432 / NCIMB 13614 / HKI 0122) protein is DNA-directed RNA polymerase subunit omega.